The primary structure comprises 124 residues: Fluoride-specific ion channel FluC (124 aa).

A run of 4 helical transmembrane segments spans residues 4 to 24 (LIFV…ISIF), 35 to 55 (FGTL…YALG), 62 to 82 (PEIK…FSTF), and 102 to 122 (IALN…LVFS). Residues Gly74 and Thr77 each contribute to the Na(+) site.

It belongs to the fluoride channel Fluc/FEX (TC 1.A.43) family.

It is found in the cell inner membrane. The catalysed reaction is fluoride(in) = fluoride(out). Na(+) is not transported, but it plays an essential structural role and its presence is essential for fluoride channel function. Functionally, fluoride-specific ion channel. Important for reducing fluoride concentration in the cell, thus reducing its toxicity. This is Fluoride-specific ion channel FluC from Shewanella loihica (strain ATCC BAA-1088 / PV-4).